The sequence spans 260 residues: Late transcription factor 1 (260 aa).

This sequence belongs to the chordopoxvirinae VLTF-1 family. As to quaternary structure, interacts with the late transcription factors VLTF-2 and VLTF-3. Interacts with the late transcription elongation factor H5/VLTF-4. Interacts with itself.

Associates with RNA polymerase to initiate transcription from late gene promoters. The protein is Late transcription factor 1 (VLTF1) of Vertebrata (FPV).